A 519-amino-acid chain; its full sequence is Ribonuclease Y (519 aa).

The helical transmembrane segment at 6-26 (VPFYLLIFLVGIGLGVLTFWA) threads the bilayer. The KH domain occupies 209 to 272 (TVCTVTIPNE…HIAKMALTEL (64 aa)). The HD domain maps to 335–428 (VLDHSLEVSH…CSAADAISAS (94 aa)).

It belongs to the RNase Y family.

The protein resides in the cell membrane. In terms of biological role, endoribonuclease that initiates mRNA decay. In Protochlamydia amoebophila (strain UWE25), this protein is Ribonuclease Y.